Consider the following 713-residue polypeptide: Zinc finger and BTB domain-containing protein 1 (713 aa).

A Glycyl lysine isopeptide (Lys-Gly) (interchain with G-Cter in SUMO2) cross-link involves residue lysine 3. In terms of domain architecture, BTB spans 24 to 91 (CDCCIAIDDI…MYLGKIMTAP (68 aa)). Residues lysine 200 and lysine 205 each participate in a glycyl lysine isopeptide (Lys-Gly) (interchain with G-Cter in SUMO2) cross-link. The segment at 216 to 242 (FTCDSCGFGFSCEKLLDEHVLTCTNRH) adopts a C2H2-type 1; atypical zinc-finger fold. Glycyl lysine isopeptide (Lys-Gly) (interchain with G-Cter in SUMO2) cross-links involve residues lysine 261, lysine 266, lysine 276, lysine 284, lysine 304, lysine 316, lysine 328, lysine 340, and lysine 346. The tract at residues 270–319 (AEKDSSKTFSAQPDKYREDANQAPDDSASTTGSRKSTVEAGIAGEEKSRA) is disordered. Serine 355 bears the Phosphoserine mark. Threonine 356 is modified (phosphothreonine). Lysine 381 participates in a covalent cross-link: Glycyl lysine isopeptide (Lys-Gly) (interchain with G-Cter in SUMO2). Residues 448–470 (CACGKCGQILVKGRQLQEHAQRC) form a C2H2-type 2; atypical zinc finger. Residue lysine 528 forms a Glycyl lysine isopeptide (Lys-Gly) (interchain with G-Cter in SUMO2) linkage. Residues 533–558 (PFRCPNCGQRFETENLVVEHMSSCLD) form a UBZ-type zinc finger. Residue lysine 563 forms a Glycyl lysine isopeptide (Lys-Gly) (interchain with G-Cter in SUMO2) linkage. 5 C2H2-type zinc fingers span residues 578–600 (HFCN…YTVH), 606–628 (FVCQ…NDMH), 634–656 (YVCS…MISH), 662–684 (TICQ…MDVH), and 686–709 (YTCG…NAKH).

As to quaternary structure, homodimer. Homodimer. Interacts (via BTB domain) with TRIM28 (unphosphorylated or phosphorylated form). Post-translationally, sumoylated with SUMO2 at Lys-328 and to a lesser extent at Lys-266. Sumoylation inhibits its transcriptional repression activity and regulates its subcellular localization. As to expression, expressed strongly in thymus and spleen, less in lymph nodes and peripheral blood mononuclear cells (PBMCs) and weakly in bone marrow. Strongly expressed in immature, but weakly in mature bone marrow-lymphocyte B.

Its subcellular location is the nucleus. It localises to the nucleoplasm. Its function is as follows. Acts as a transcriptional repressor. Represses cAMP-responsive element (CRE)-mediated transcriptional activation. In addition, has a role in translesion DNA synthesis. Requires for UV-inducible RAD18 loading, PCNA monoubiquitination, POLH recruitment to replication factories and efficient translesion DNA synthesis. Plays a key role in the transcriptional regulation of T lymphocyte development. The polypeptide is Zinc finger and BTB domain-containing protein 1 (Zbtb1) (Mus musculus (Mouse)).